Reading from the N-terminus, the 337-residue chain is MIQKNWQELIKPNKVDFITNGSRTHATVVAEPLERGFGLTLGNALRRVLLSSLRGAAVTAIQIDGVLHEFSSIPGVREDVTDIVLNVKEIAIRMEGEGPKRMVVRKEGPGVVTAGDIQTVGDVEILNPDHVICTLDEGAEIRMEFTVNTGKGYVPADRNRAEDAPIGLIPVDSLYSPVRKVSYKIENTREGQVLDYDKLTLNIETNGSVSGEDAVAYAARILQDQLAIFVNFEEPQKEAPQEQVAELAFNPALLKKVDELELSVRSANCLKNDNIVYIGDLIQKTEAEMLRTPNFGRKSLNEIKEVLASMGLHLGMEIPSWPPENIEDLAKRYEDQY.

The interval 1-233 (MIQKNWQELI…DQLAIFVNFE (233 aa)) is alpha N-terminal domain (alpha-NTD). The segment at 249–337 (FNPALLKKVD…DLAKRYEDQY (89 aa)) is alpha C-terminal domain (alpha-CTD).

The protein belongs to the RNA polymerase alpha chain family. Homodimer. The RNAP catalytic core consists of 2 alpha, 1 beta, 1 beta' and 1 omega subunit. When a sigma factor is associated with the core the holoenzyme is formed, which can initiate transcription.

The catalysed reaction is RNA(n) + a ribonucleoside 5'-triphosphate = RNA(n+1) + diphosphate. In terms of biological role, DNA-dependent RNA polymerase catalyzes the transcription of DNA into RNA using the four ribonucleoside triphosphates as substrates. The polypeptide is DNA-directed RNA polymerase subunit alpha (Brucella anthropi (strain ATCC 49188 / DSM 6882 / CCUG 24695 / JCM 21032 / LMG 3331 / NBRC 15819 / NCTC 12168 / Alc 37) (Ochrobactrum anthropi)).